The primary structure comprises 663 residues: Alcohol oxidase 1 (663 aa).

8-38 (DILVLGGGSSGSCIAGRLANLDHSLKVGLIE) contacts FAD. Histidine 567 serves as the catalytic Proton acceptor. The Microbody targeting signal signature appears at 661 to 663 (ARF).

It belongs to the GMC oxidoreductase family. In terms of assembly, homooctamer. It depends on FAD as a cofactor.

It localises to the peroxisome matrix. The catalysed reaction is a primary alcohol + O2 = an aldehyde + H2O2. It functions in the pathway energy metabolism; methane degradation. In terms of biological role, major isoform of alcohol oxidase, which catalyzes the oxidation of methanol to formaldehyde and hydrogen peroxide, the first step in the methanol utilization pathway of methylotrophic yeasts. The chain is Alcohol oxidase 1 (AOX1) from Komagataella phaffii (strain ATCC 76273 / CBS 7435 / CECT 11047 / NRRL Y-11430 / Wegner 21-1) (Yeast).